The primary structure comprises 208 residues: Adapter protein MecA (208 aa).

This sequence belongs to the MecA family. In terms of assembly, homodimer.

Its function is as follows. Enables the recognition and targeting of unfolded and aggregated proteins to the ClpC protease or to other proteins involved in proteolysis. This chain is Adapter protein MecA, found in Exiguobacterium sibiricum (strain DSM 17290 / CCUG 55495 / CIP 109462 / JCM 13490 / 255-15).